The sequence spans 128 residues: Glycine cleavage system H protein (128 aa).

One can recognise a Lipoyl-binding domain in the interval 24–106 (VATVGITAFA…YNNGWLLKIK (83 aa)). Lysine 65 carries the N6-lipoyllysine modification.

Belongs to the GcvH family. As to quaternary structure, the glycine cleavage system is composed of four proteins: P, T, L and H. It depends on (R)-lipoate as a cofactor.

Its function is as follows. The glycine cleavage system catalyzes the degradation of glycine. The H protein shuttles the methylamine group of glycine from the P protein to the T protein. The sequence is that of Glycine cleavage system H protein from Acaryochloris marina (strain MBIC 11017).